The primary structure comprises 932 residues: MYCBP-associated protein (932 aa).

Disordered regions lie at residues Met1–Asn39 and Glu165–His187. Basic and acidic residues predominate over residues Glu165–Pro178. Position 559 is a phosphoserine (Ser559). Thr560 carries the phosphothreonine modification. At Ser566 the chain carries Phosphoserine. The disordered stretch occupies residues Leu789–Pro886. Positions Gln795–Thr806 are enriched in polar residues. Basic and acidic residues predominate over residues Ala810–Ser869.

In terms of assembly, interacts with MYCBP.

Its subcellular location is the cytoplasm. It localises to the membrane. In terms of biological role, may play a role in spermatogenesis. May be involved in synaptic processes. The protein is MYCBP-associated protein of Mus musculus (Mouse).